Here is a 520-residue protein sequence, read N- to C-terminus: L-cysteine:1D-myo-inositol 2-amino-2-deoxy-alpha-D-glucopyranoside ligase (520 aa).

Cys48 lines the Zn(2+) pocket. L-cysteinyl-5'-AMP contacts are provided by residues Cys48–Thr51, Thr63, and Asn86–Thr88. The short motif at Ile50 to His60 is the 'HIGH' region element. Positions Glu192–Pro197 match the 'ERGGDP' region motif. L-cysteinyl-5'-AMP is bound at residue Trp232. Cys236 is a binding site for Zn(2+). Gly254–Asp256 contacts L-cysteinyl-5'-AMP. Position 261 (His261) interacts with Zn(2+). Ile288 lines the L-cysteinyl-5'-AMP pocket. Positions Lys294–Ser298 match the 'KMSKS' region motif.

Belongs to the class-I aminoacyl-tRNA synthetase family. MshC subfamily. As to quaternary structure, monomer. Zn(2+) is required as a cofactor.

The catalysed reaction is 1D-myo-inositol 2-amino-2-deoxy-alpha-D-glucopyranoside + L-cysteine + ATP = 1D-myo-inositol 2-(L-cysteinylamino)-2-deoxy-alpha-D-glucopyranoside + AMP + diphosphate + H(+). Its function is as follows. Catalyzes the ATP-dependent condensation of GlcN-Ins and L-cysteine to form L-Cys-GlcN-Ins. This chain is L-cysteine:1D-myo-inositol 2-amino-2-deoxy-alpha-D-glucopyranoside ligase, found in Corynebacterium kroppenstedtii (strain DSM 44385 / JCM 11950 / CIP 105744 / CCUG 35717).